A 390-amino-acid chain; its full sequence is Glutamate 5-kinase (390 aa).

K29 contributes to the ATP binding site. Substrate-binding residues include S69, D156, and N168. Residue 188–189 (TD) coordinates ATP. Residues 295-374 (SGSLIVDAGA…EQFDRILGNN (80 aa)) enclose the PUA domain.

It belongs to the glutamate 5-kinase family.

It is found in the cytoplasm. The enzyme catalyses L-glutamate + ATP = L-glutamyl 5-phosphate + ADP. It participates in amino-acid biosynthesis; L-proline biosynthesis; L-glutamate 5-semialdehyde from L-glutamate: step 1/2. Its function is as follows. Catalyzes the transfer of a phosphate group to glutamate to form L-glutamate 5-phosphate. The polypeptide is Glutamate 5-kinase (Psychrobacter cryohalolentis (strain ATCC BAA-1226 / DSM 17306 / VKM B-2378 / K5)).